Reading from the N-terminus, the 189-residue chain is Frataxin-like protein, mitochondrial (189 aa).

Residues 1–50 (MNCARLHQRIPLRAMALTTTSYPALAPSHSFANASTSVMTASAMAVAHRA) constitute a mitochondrion transit peptide.

The protein belongs to the frataxin family. Interacts with IscU; the interaction is direct.

Its subcellular location is the mitochondrion. The catalysed reaction is 4 Fe(2+) + O2 + 4 H(+) = 4 Fe(3+) + 2 H2O. Its function is as follows. Iron-binding protein which binds 2 iron atoms per monomer. Probably, acts as an iron carrier for the biosynthesis of Fe-S clusters. Stimulates the cysteine desulphurase activity of IscS in the presence of IscU. The sequence is that of Frataxin-like protein, mitochondrial from Leishmania donovani.